Reading from the N-terminus, the 268-residue chain is Mitochondrial distribution and morphology protein 12 (268 aa).

The 266-residue stretch at 1 to 266 (MSIDLEWCKL…FPNFHTIVMA (266 aa)) folds into the SMP-LTD domain. The segment at 66-136 (EDDEEGSDRG…PPPAENPHPN (71 aa)) is disordered. A compositionally biased stretch (polar residues) spans 102 to 111 (PATNVTSSLD). Over residues 112–121 (TRSDQPDDQK) the composition is skewed to basic and acidic residues.

Belongs to the MDM12 family. As to quaternary structure, component of the ER-mitochondria encounter structure (ERMES) or MDM complex, composed of MMM1, MDM10, MDM12 and MDM34. An MMM1 homodimer associates with one molecule of MDM12 on each side in a pairwise head-to-tail manner, and the SMP-LTD domains of MMM1 and MDM12 generate a continuous hydrophobic tunnel for phospholipid trafficking.

It localises to the mitochondrion outer membrane. Its subcellular location is the endoplasmic reticulum membrane. Component of the ERMES/MDM complex, which serves as a molecular tether to connect the endoplasmic reticulum (ER) and mitochondria. Components of this complex are involved in the control of mitochondrial shape and protein biogenesis, and function in nonvesicular lipid trafficking between the ER and mitochondria. MDM12 is required for the interaction of the ER-resident membrane protein MMM1 and the outer mitochondrial membrane-resident beta-barrel protein MDM10. The MDM12-MMM1 subcomplex functions in the major beta-barrel assembly pathway that is responsible for biogenesis of all mitochondrial outer membrane beta-barrel proteins, and acts in a late step after the SAM complex. The MDM10-MDM12-MMM1 subcomplex further acts in the TOM40-specific pathway after the action of the MDM12-MMM1 complex. Essential for establishing and maintaining the structure of mitochondria and maintenance of mtDNA nucleoids. This chain is Mitochondrial distribution and morphology protein 12, found in Laccaria bicolor (strain S238N-H82 / ATCC MYA-4686) (Bicoloured deceiver).